We begin with the raw amino-acid sequence, 201 residues long: MSKRIAGPEIERLIQLLARVPGLGPRSARRAALHLIKKKEALLVPLGGAMQEAAEKVRICSCCGNVDTSDPCTICTDERRDPATLIVVEDVSDLWALERAGTMNVRYHVLGGRLSPLDGIGPDDLNIKGLVERVASGAIKEVILAVNATVEGQTTAHYITDQLSNFDVRVTRLAHGVPVGGELDYLDEGTLAAALRARTTL.

The segment at 60 to 75 (CSCCGNVDTSDPCTIC) adopts a C4-type zinc-finger fold. Residues 83 to 178 (ATLIVVEDVS…RVTRLAHGVP (96 aa)) enclose the Toprim domain.

The protein belongs to the RecR family.

In terms of biological role, may play a role in DNA repair. It seems to be involved in an RecBC-independent recombinational process of DNA repair. It may act with RecF and RecO. The chain is Recombination protein RecR from Brucella abortus biovar 1 (strain 9-941).